A 476-amino-acid polypeptide reads, in one-letter code: Glutamate--tRNA ligase (476 aa).

The 'HIGH' region motif lies at 9-19 (PSPTGTLHLGT). The 'KMSKS' region motif lies at 248 to 252 (KLSKR). Lys251 provides a ligand contact to ATP.

It belongs to the class-I aminoacyl-tRNA synthetase family. Glutamate--tRNA ligase type 1 subfamily. Monomer.

It is found in the cytoplasm. The enzyme catalyses tRNA(Glu) + L-glutamate + ATP = L-glutamyl-tRNA(Glu) + AMP + diphosphate. Its function is as follows. Catalyzes the attachment of glutamate to tRNA(Glu) in a two-step reaction: glutamate is first activated by ATP to form Glu-AMP and then transferred to the acceptor end of tRNA(Glu). This chain is Glutamate--tRNA ligase, found in Prochlorococcus marinus (strain NATL1A).